Consider the following 403-residue polypeptide: S-adenosylmethionine synthase (403 aa).

Histidine 17 lines the ATP pocket. Aspartate 19 is a Mg(2+) binding site. Glutamate 45 serves as a coordination point for K(+). 2 residues coordinate L-methionine: glutamate 58 and glutamine 104. Positions 104–114 are flexible loop; that stretch reads QSPDIAQGVDT. Residues 179 to 181, 250 to 251, aspartate 259, 265 to 266, alanine 282, and lysine 286 each bind ATP; these read DGK, KF, and RK. Aspartate 259 is an L-methionine binding site. Residue lysine 290 coordinates L-methionine.

It belongs to the AdoMet synthase family. As to quaternary structure, homotetramer; dimer of dimers. It depends on Mg(2+) as a cofactor. K(+) serves as cofactor.

The protein localises to the cytoplasm. The catalysed reaction is L-methionine + ATP + H2O = S-adenosyl-L-methionine + phosphate + diphosphate. Its pathway is amino-acid biosynthesis; S-adenosyl-L-methionine biosynthesis; S-adenosyl-L-methionine from L-methionine: step 1/1. Functionally, catalyzes the formation of S-adenosylmethionine (AdoMet) from methionine and ATP. The overall synthetic reaction is composed of two sequential steps, AdoMet formation and the subsequent tripolyphosphate hydrolysis which occurs prior to release of AdoMet from the enzyme. This Mycobacterium ulcerans (strain Agy99) protein is S-adenosylmethionine synthase.